We begin with the raw amino-acid sequence, 209 residues long: Dual specificity phosphatase 29 (209 aa).

Residues 44–193 (NHVNEVWPNL…LRELDIQLAL (150 aa)) form the Tyrosine-protein phosphatase domain. 137 to 144 (NCAMGRSR) is a substrate binding site. Cysteine 138 acts as the Phosphocysteine intermediate in catalysis.

Belongs to the protein-tyrosine phosphatase family. Non-receptor class dual specificity subfamily.

It localises to the cytoplasm. It is found in the nucleus. It carries out the reaction O-phospho-L-tyrosyl-[protein] + H2O = L-tyrosyl-[protein] + phosphate. It catalyses the reaction O-phospho-L-seryl-[protein] + H2O = L-seryl-[protein] + phosphate. The catalysed reaction is O-phospho-L-threonyl-[protein] + H2O = L-threonyl-[protein] + phosphate. In terms of biological role, dual specificity phosphatase able to dephosphorylate phosphotyrosine, phosphoserine and phosphothreonine residues within the same substrate, with a preference for phosphotyrosine as a substrate. Involved in the modulation of AMPK and MAPK1/2 signaling pathways. This chain is Dual specificity phosphatase 29 (dusp29), found in Xenopus tropicalis (Western clawed frog).